Here is a 258-residue protein sequence, read N- to C-terminus: Hydroxyacylglutathione hydrolase (258 aa).

The Zn(2+) site is built by His55, His57, Asp59, His60, His115, Asp132, and His170.

This sequence belongs to the metallo-beta-lactamase superfamily. Glyoxalase II family. In terms of assembly, monomer. Zn(2+) serves as cofactor.

It carries out the reaction an S-(2-hydroxyacyl)glutathione + H2O = a 2-hydroxy carboxylate + glutathione + H(+). It functions in the pathway secondary metabolite metabolism; methylglyoxal degradation; (R)-lactate from methylglyoxal: step 2/2. Its function is as follows. Thiolesterase that catalyzes the hydrolysis of S-D-lactoyl-glutathione to form glutathione and D-lactic acid. This chain is Hydroxyacylglutathione hydrolase, found in Shewanella halifaxensis (strain HAW-EB4).